The primary structure comprises 327 residues: MQQLTEIVEQALVIIDQASDLKALDDIRVDYLGKKGKITDMMKMMGSLSPEEKPAFGQAVNDAKQAIQQKLTERIDGLKSSELEAKLIAEKIDVTLPGRTQEIGGLHPVTRTIERIETFFGELGFSVKQGPEIEDDFHNFDALNISEHHPARADHDTFYFNPKLMLRTQTSGVQIRTMETEKPPLRIISPGRVYRNDYDQTHTPMFHQVEGLLVDEHVNFAELKGILHDFLRNFFEEDLQVRFRPSYFPFTEPSAEVDVMGKNGKWLEVLGCGMVHPNVLRSVGIDPEKYSGFAFGMGVERLTMLRYGVNDLRSFFENDLRFLKQFK.

Residue Glu-252 participates in Mg(2+) binding.

The protein belongs to the class-II aminoacyl-tRNA synthetase family. Phe-tRNA synthetase alpha subunit type 1 subfamily. In terms of assembly, tetramer of two alpha and two beta subunits. Requires Mg(2+) as cofactor.

It is found in the cytoplasm. It catalyses the reaction tRNA(Phe) + L-phenylalanine + ATP = L-phenylalanyl-tRNA(Phe) + AMP + diphosphate + H(+). This is Phenylalanine--tRNA ligase alpha subunit from Shewanella baltica (strain OS223).